The primary structure comprises 329 residues: Transcription factor TGA2.3 (329 aa).

The tract at residues 1 to 48 (MADMSPRTDTSTDDTDDNHMLEPGQLALAAASDSDRSKDKHEDQKTLR) is disordered. Basic and acidic residues predominate over residues 33–46 (DSDRSKDKHEDQKT). The bZIP domain occupies 43–87 (DQKTLRRLAQNREAARKSRLRKKAYVQQLENSRLKLTQLEQELQR). Residues 45–65 (KTLRRLAQNREAARKSRLRKK) are basic motif. The segment at 71–85 (LENSRLKLTQLEQEL) is leucine-zipper. The DOG1 domain maps to 110–326 (ALAFDMEYAR…RALSSLWLAR (217 aa)).

The protein belongs to the bZIP family. Interacts with NPR1/NH1 and NPR3/NH3.

Its subcellular location is the nucleus. Its function is as follows. Transcriptional regulator involved in defense response. The chain is Transcription factor TGA2.3 from Oryza sativa subsp. japonica (Rice).